We begin with the raw amino-acid sequence, 217 residues long: Melanocortin-2 receptor accessory protein 2A (217 aa).

A glycan (N-linked (GlcNAc...) asparagine) is linked at asparagine 8. The chain crosses the membrane as a helical span at residues 42 to 62 (IVIGFWVGLAVFVIFMFFVLT).

The protein belongs to the MRAP family. In terms of assembly, interacts with mc4r.

Its subcellular location is the cell membrane. The protein resides in the endoplasmic reticulum membrane. In terms of biological role, inhibitor of melanocortin receptor 4 (mc4r), a receptor involved in energy homeostasis. Plays a role during larval development in the control of energy homeostasis and body weight regulation by decreasing ligand-sensitivity of mc4r and mc4r-mediated generation of cAMP, leading to stimulate growth during larval development. Acts by stabilizing an inactive conformation of mc4r during embryonic development, when all the energy consumed is obtained from the yolk sac, possibly to speed the rapid maturation to the mobile free-feeding juvenile stage reached at 5 dpf. This is Melanocortin-2 receptor accessory protein 2A (mrap2a) from Danio rerio (Zebrafish).